The following is a 346-amino-acid chain: GPALPP motifs-containing protein 1 (346 aa).

Disordered stretches follow at residues methionine 1 to methionine 283 and lysine 289 to aspartate 308. Alanine 2 is subject to N-acetylalanine. The short motif at glycine 7–proline 12 is the GPALPP motif 1 element. At serine 28 the chain carries Phosphoserine. A GPALPP motif 2 motif is present at residues glycine 32–proline 37. Over residues glycine 60 to threonine 69 the composition is skewed to acidic residues. Residues glycine 91 to proline 96 carry the GPALPP motif 3 motif. At serine 104 the chain carries Phosphoserine. Residues proline 106 to proline 115 show a composition bias toward pro residues. Residues glycine 111–proline 116 carry the GPALPP motif 4 motif. A compositionally biased stretch (basic and acidic residues) spans glutamine 123 to proline 132. Serine 136, serine 141, and serine 146 each carry phosphoserine. The segment covering glutamate 142 to isoleucine 152 has biased composition (acidic residues). 2 stretches are compositionally biased toward basic and acidic residues: residues glutamate 169–threonine 193 and proline 233–alanine 267. A Glycyl lysine isopeptide (Lys-Gly) (interchain with G-Cter in SUMO2) cross-link involves residue lysine 277. Over residues lysine 293 to aspartate 308 the composition is skewed to basic and acidic residues. A Glycyl lysine isopeptide (Lys-Gly) (interchain with G-Cter in SUMO2) cross-link involves residue lysine 314.

The protein is GPALPP motifs-containing protein 1 (Gpalpp1) of Mus musculus (Mouse).